The sequence spans 439 residues: Serine hydroxymethyltransferase (439 aa).

127–129 (AHV) is a binding site for (6S)-5,6,7,8-tetrahydrofolate. Residue Lys-233 is modified to N6-(pyridoxal phosphate)lysine.

The protein belongs to the SHMT family. In terms of assembly, homodimer. It depends on pyridoxal 5'-phosphate as a cofactor.

Its subcellular location is the cytoplasm. It functions in the pathway amino-acid biosynthesis; glycine biosynthesis; glycine from L-serine: step 1/1. In terms of biological role, catalyzes the reversible interconversion of serine and glycine with a modified folate serving as the one-carbon carrier. Also exhibits a pteridine-independent aldolase activity toward beta-hydroxyamino acids, producing glycine and aldehydes, via a retro-aldol mechanism. The sequence is that of Serine hydroxymethyltransferase from Aeropyrum pernix (strain ATCC 700893 / DSM 11879 / JCM 9820 / NBRC 100138 / K1).